The sequence spans 471 residues: (13S,14R)-1,13-dihydroxy-N-methylcanadine 13-O-acetyltransferase AT1 (471 aa).

The protein belongs to the plant acyltransferase family.

The enzyme catalyses (13S,14R)-1,13-dihydroxy-N-methylcanadine + acetyl-CoA = (13S,14R)-13-O-acetyl-1-hydroxy-N-methylcanadine + CoA. It functions in the pathway alkaloid biosynthesis. In terms of biological role, acetyltransferase involved in the biosynthesis of the benzylisoquinoline alkaloid noscapine. Converts (13S,14R)-1,13-dihydroxy-N-methylcanadine to (13S,14R)-13-O-acetyl-1-hydroxy-N-methylcanadine. This chain is (13S,14R)-1,13-dihydroxy-N-methylcanadine 13-O-acetyltransferase AT1, found in Papaver somniferum (Opium poppy).